Consider the following 478-residue polypeptide: 3-isopropylmalate dehydratase large subunit (478 aa).

[4Fe-4S] cluster is bound by residues cysteine 359, cysteine 420, and cysteine 423.

This sequence belongs to the aconitase/IPM isomerase family. LeuC type 1 subfamily. Heterodimer of LeuC and LeuD. [4Fe-4S] cluster serves as cofactor.

The enzyme catalyses (2R,3S)-3-isopropylmalate = (2S)-2-isopropylmalate. Its pathway is amino-acid biosynthesis; L-leucine biosynthesis; L-leucine from 3-methyl-2-oxobutanoate: step 2/4. In terms of biological role, catalyzes the isomerization between 2-isopropylmalate and 3-isopropylmalate, via the formation of 2-isopropylmaleate. The sequence is that of 3-isopropylmalate dehydratase large subunit from Psychrobacter sp. (strain PRwf-1).